Reading from the N-terminus, the 198-residue chain is Elongation factor Ts (198 aa).

Residues 82 to 85 are involved in Mg(2+) ion dislocation from EF-Tu; it reads TDFV.

This sequence belongs to the EF-Ts family.

The protein resides in the cytoplasm. Its function is as follows. Associates with the EF-Tu.GDP complex and induces the exchange of GDP to GTP. It remains bound to the aminoacyl-tRNA.EF-Tu.GTP complex up to the GTP hydrolysis stage on the ribosome. In Oleidesulfovibrio alaskensis (strain ATCC BAA-1058 / DSM 17464 / G20) (Desulfovibrio alaskensis), this protein is Elongation factor Ts.